A 477-amino-acid polypeptide reads, in one-letter code: SH3 domain-binding protein 5 homolog (477 aa).

A coiled-coil region spans residues 12–95 (QIQIELENLN…AAVKFQRANE (84 aa)). A phosphoserine mark is found at S113 and S115. Residues 122–221 (NAWQEMLNHA…YSTALRNLER (100 aa)) are a coiled coil. Disordered regions lie at residues 224–258 (EDIHRQRGDFPTPPGPREPGVGAELNSPTSSALPS) and 276–306 (GSQMSLGAKTPQAAAETEDEEDACDYDETGA). Residues 291–305 (ETEDEEDACDYDETG) show a composition bias toward acidic residues.

It belongs to the SH3BP5 family.

This chain is SH3 domain-binding protein 5 homolog (pcs), found in Drosophila melanogaster (Fruit fly).